Reading from the N-terminus, the 282-residue chain is Leucine-rich protein (282 aa).

Not essential for viability or growth. Nevertheless, uncontrolled production in E.coli is detrimental to the normal physiology of the bacteria. This chain is Leucine-rich protein (lrp), found in Streptococcus dysgalactiae subsp. equisimilis (Streptococcus equisimilis).